The sequence spans 436 residues: GTPase Der (436 aa).

2 EngA-type G domains span residues 4–167 (PIVA…NKES) and 176–351 (IRLS…ENHK). GTP contacts are provided by residues 10–17 (GKPNVGKS), 57–61 (DTGGI), 119–122 (NKVD), 182–189 (GRPNVGKS), 229–233 (DTAGM), and 294–297 (NKWD). A KH-like domain is found at 352–436 (KRVQSSTLNE…PIHIIPRKRN (85 aa)).

It belongs to the TRAFAC class TrmE-Era-EngA-EngB-Septin-like GTPase superfamily. EngA (Der) GTPase family. As to quaternary structure, associates with the 50S ribosomal subunit.

Its function is as follows. GTPase that plays an essential role in the late steps of ribosome biogenesis. The sequence is that of GTPase Der from Staphylococcus epidermidis (strain ATCC 35984 / DSM 28319 / BCRC 17069 / CCUG 31568 / BM 3577 / RP62A).